A 252-amino-acid chain; its full sequence is 5-oxoprolinase subunit A (252 aa).

The protein belongs to the LamB/PxpA family. Forms a complex composed of PxpA, PxpB and PxpC.

The catalysed reaction is 5-oxo-L-proline + ATP + 2 H2O = L-glutamate + ADP + phosphate + H(+). Its function is as follows. Catalyzes the cleavage of 5-oxoproline to form L-glutamate coupled to the hydrolysis of ATP to ADP and inorganic phosphate. The chain is 5-oxoprolinase subunit A from Mycobacterium avium (strain 104).